The following is a 625-amino-acid chain: Endoglucanase D (625 aa).

The first 17 residues, 1 to 17, serve as a signal peptide directing secretion; the sequence is SLTGVFPSGLIETKVSA. The Nucleophile role is filled by Asp177. Active-site residues include His492 and Asp522. Glu531 functions as the Proton donor in the catalytic mechanism. The Dockerin domain maps to 555–625; the sequence is NEVLYGDVND…LIRVIEKLPI (71 aa).

This sequence belongs to the glycosyl hydrolase 9 (cellulase E) family. It depends on Ca(2+) as a cofactor.

It catalyses the reaction Endohydrolysis of (1-&gt;4)-beta-D-glucosidic linkages in cellulose, lichenin and cereal beta-D-glucans.. This enzyme catalyzes the endohydrolysis of 1,4-beta-glucosidic linkages in cellulose, lichenin and cereal beta-D-glucans. This is Endoglucanase D (celD) from Acetivibrio thermocellus (Hungateiclostridium thermocellum).